Consider the following 147-residue polypeptide: 3-dehydroquinate dehydratase (147 aa).

The active-site Proton acceptor is Y22. Positions 73, 79, and 86 each coordinate substrate. The active-site Proton donor is H99. Residues L100–S101 and R110 contribute to the substrate site.

Belongs to the type-II 3-dehydroquinase family. In terms of assembly, homododecamer.

The catalysed reaction is 3-dehydroquinate = 3-dehydroshikimate + H2O. Its pathway is metabolic intermediate biosynthesis; chorismate biosynthesis; chorismate from D-erythrose 4-phosphate and phosphoenolpyruvate: step 3/7. In terms of biological role, catalyzes a trans-dehydration via an enolate intermediate. The protein is 3-dehydroquinate dehydratase of Synechococcus sp. (strain WH7803).